A 273-amino-acid chain; its full sequence is Putative carboxypeptidase YodJ (273 aa).

The first 23 residues, Met-1–Gly-23, serve as a signal peptide directing secretion. Cys-24 carries N-palmitoyl cysteine lipidation. A lipid anchor (S-diacylglycerol cysteine) is attached at Cys-24. The segment at Ser-27–Asn-58 is disordered. The span at Ala-31–Lys-53 shows a compositional bias: basic and acidic residues.

It belongs to the peptidase M15B family.

The protein resides in the cell membrane. The chain is Putative carboxypeptidase YodJ (yodJ) from Bacillus subtilis (strain 168).